A 449-amino-acid polypeptide reads, in one-letter code: Tubulin alpha-8 chain (449 aa).

The short motif at 1–4 (MREC) is the MREC motif element. GTP contacts are provided by glutamine 11, glutamate 71, serine 140, glycine 144, threonine 145, threonine 179, asparagine 206, and asparagine 228. Residue glutamate 71 participates in Mg(2+) binding. Residue glutamate 254 is part of the active site.

This sequence belongs to the tubulin family. In terms of assembly, dimer of alpha and beta chains. A typical microtubule is a hollow water-filled tube with an outer diameter of 25 nm and an inner diameter of 15 nM. Alpha-beta heterodimers associate head-to-tail to form protofilaments running lengthwise along the microtubule wall with the beta-tubulin subunit facing the microtubule plus end conferring a structural polarity. Microtubules usually have 13 protofilaments but different protofilament numbers can be found in some organisms and specialized cells. It depends on Mg(2+) as a cofactor. In terms of processing, some glutamate residues at the C-terminus are polyglycylated, resulting in polyglycine chains on the gamma-carboxyl group. Glycylation is mainly limited to tubulin incorporated into axonemes (cilia and flagella) whereas glutamylation is prevalent in neuronal cells, centrioles, axonemes, and the mitotic spindle. Both modifications can coexist on the same protein on adjacent residues, and lowering polyglycylation levels increases polyglutamylation, and reciprocally. Cilia and flagella glycylation is required for their stability and maintenance. Flagella glycylation controls sperm motility. Some glutamate residues at the C-terminus are polyglutamylated, resulting in polyglutamate chains on the gamma-carboxyl group. Polyglutamylation plays a key role in microtubule severing by spastin (SPAST). SPAST preferentially recognizes and acts on microtubules decorated with short polyglutamate tails: severing activity by SPAST increases as the number of glutamates per tubulin rises from one to eight, but decreases beyond this glutamylation threshold. Glutamylation is also involved in cilia motility. Post-translationally, the C-terminal phenylalanine residue is cleaved by MATCAP1/KIAA0895L.

It is found in the cytoplasm. The protein resides in the cytoskeleton. It carries out the reaction GTP + H2O = GDP + phosphate + H(+). Its function is as follows. Tubulin is the major constituent of microtubules, a cylinder consisting of laterally associated linear protofilaments composed of alpha- and beta-tubulin heterodimers. Microtubules grow by the addition of GTP-tubulin dimers to the microtubule end, where a stabilizing cap forms. Below the cap, tubulin dimers are in GDP-bound state, owing to GTPase activity of alpha-tubulin. The polypeptide is Tubulin alpha-8 chain (TUBA8) (Bos taurus (Bovine)).